Consider the following 448-residue polypeptide: Mitochondrial distribution and morphology protein 10 (448 aa).

Belongs to the MDM10 family. As to quaternary structure, component of the ER-mitochondria encounter structure (ERMES) or MDM complex, composed of MMM1, MDM10, MDM12 and MDM34. Associates with the mitochondrial outer membrane sorting assembly machinery SAM(core) complex.

Its subcellular location is the mitochondrion outer membrane. Its function is as follows. Component of the ERMES/MDM complex, which serves as a molecular tether to connect the endoplasmic reticulum and mitochondria. Components of this complex are involved in the control of mitochondrial shape and protein biogenesis and may function in phospholipid exchange. MDM10 is involved in the late assembly steps of the general translocase of the mitochondrial outer membrane (TOM complex). Functions in the TOM40-specific route of the assembly of outer membrane beta-barrel proteins, including the association of TOM40 with the receptor TOM22 and small TOM proteins. Can associate with the SAM(core) complex as well as the MDM12-MMM1 complex, both involved in late steps of the major beta-barrel assembly pathway, that is responsible for biogenesis of all outer membrane beta-barrel proteins. May act as a switch that shuttles between both complexes and channels precursor proteins into the TOM40-specific pathway. Plays a role in mitochondrial morphology and in the inheritance of mitochondria. The protein is Mitochondrial distribution and morphology protein 10 of Podospora anserina (strain S / ATCC MYA-4624 / DSM 980 / FGSC 10383) (Pleurage anserina).